Reading from the N-terminus, the 179-residue chain is Replication restart protein DnaT (179 aa).

Residues 156–179 (GGLPKRDVNTVSEPDSQIPPGFRG) are disordered.

Belongs to the DnaT family. As to quaternary structure, homooligomerizes. Interacts with PriB. Component of the replication restart primosome. Primosome assembly occurs via a 'hand-off' mechanism. PriA binds to replication forks, subsequently PriB then DnaT bind; DnaT then displaces ssDNA to generate the helicase loading substrate.

Functionally, involved in the restart of stalled replication forks, which reloads the replicative helicase on sites other than the origin of replication. Can function in multiple replication restart pathways. Displaces ssDNA from a PriB-ssDNA complex. Probably forms a spiral filament on ssDNA. This chain is Replication restart protein DnaT, found in Escherichia coli O7:K1 (strain IAI39 / ExPEC).